We begin with the raw amino-acid sequence, 61 residues long: Large ribosomal subunit protein bL28 (61 aa).

The disordered stretch occupies residues 1–26; the sequence is MAKDFLNGKRTHFGNKRSHALNSSRR. The segment covering 9–19 has biased composition (basic residues); the sequence is KRTHFGNKRSH.

The protein belongs to the bacterial ribosomal protein bL28 family.

In Levilactobacillus brevis (strain ATCC 367 / BCRC 12310 / CIP 105137 / JCM 1170 / LMG 11437 / NCIMB 947 / NCTC 947) (Lactobacillus brevis), this protein is Large ribosomal subunit protein bL28.